We begin with the raw amino-acid sequence, 104 residues long: Protein EPIDERMAL PATTERNING FACTOR 1 (104 aa).

Residues Met1–Ala20 form the signal peptide. 4 cysteine pairs are disulfide-bonded: Cys60–Cys94, Cys64–Cys70, Cys67–Cys96, and Cys79–Cys88. Asn98 is a glycosylation site (N-linked (GlcNAc...) asparagine).

The protein belongs to the plant cysteine rich small secretory peptide family. Epidermal patterning factor subfamily. In terms of assembly, interacts with ERECTA and ERL1, but not with TMM. As to expression, expressed in shoots, but not in roots. Mostly localized in developing leaves, specifically in meristemoids, guard mother cells (GMCs), and young guard cells.

It localises to the secreted. In terms of biological role, controls stomatal patterning. Regulates asymmetric cell division during guard cell differentiation. Mediates stomatal development inhibition. Not cleaved by the protease CRSP (AC Q9LNU1). MEPF1: mobile signal controlling stomatal development in a non-cell-autonomous manner. Uses ERL1 as major receptor. May act by competing with somatogen (AC Q9SV72) for the same receptor, TMM (AC Q9SSD1). The protein is Protein EPIDERMAL PATTERNING FACTOR 1 of Arabidopsis thaliana (Mouse-ear cress).